The sequence spans 89 residues: uncharacterized protein (89 aa).

Residues 28–50 (LYLDLGFSALLFYNSNLLFSFIL) traverse the membrane as a helical segment.

The protein localises to the membrane. This is an uncharacterized protein from Archaeoglobus fulgidus (strain ATCC 49558 / DSM 4304 / JCM 9628 / NBRC 100126 / VC-16).